Reading from the N-terminus, the 397-residue chain is Chorismate synthase (397 aa).

Arg-40 and Arg-46 together coordinate NADP(+). FMN is bound by residues 129–131 (RSS), 257–258 (QA), Gly-302, 317–321 (KPISS), and Arg-343.

The protein belongs to the chorismate synthase family. In terms of assembly, homotetramer. Requires FMNH2 as cofactor.

The catalysed reaction is 5-O-(1-carboxyvinyl)-3-phosphoshikimate = chorismate + phosphate. The protein operates within metabolic intermediate biosynthesis; chorismate biosynthesis; chorismate from D-erythrose 4-phosphate and phosphoenolpyruvate: step 7/7. Catalyzes the anti-1,4-elimination of the C-3 phosphate and the C-6 proR hydrogen from 5-enolpyruvylshikimate-3-phosphate (EPSP) to yield chorismate, which is the branch point compound that serves as the starting substrate for the three terminal pathways of aromatic amino acid biosynthesis. This reaction introduces a second double bond into the aromatic ring system. This chain is Chorismate synthase, found in Pelodictyon phaeoclathratiforme (strain DSM 5477 / BU-1).